We begin with the raw amino-acid sequence, 478 residues long: Sodium-coupled neutral amino acid transporter 5 (478 aa).

Residues 1–20 (MAISSAEGMELQDPKMNGAL) are disordered. Over 1 to 57 (MAISSAEGMELQDPKMNGALPGNAVEQEHEGFLPSHSPSPGRKPAQFMDFEGKTSFG) the chain is Cytoplasmic. A helical membrane pass occupies residues 58–80 (MSVFNLSNAIMGSGILGLAYAMA). Topologically, residues 81-93 (HTGILLFLALLLC) are extracellular. Residues 94 to 114 (IALLSSYSIHLLLTCAGVVGI) form a helical membrane-spanning segment. Topologically, residues 115-131 (RAYEQLGQRALGPAGKV) are cytoplasmic. The helical transmembrane segment at 132–152 (VVAAVICLHNVGAMSSYLFII) threads the bilayer. Residues 153–172 (KSELPLVIATFLDMDPEGDW) are Extracellular-facing. A helical transmembrane segment spans residues 173-193 (FLKGNLLIIIVSVLIILPLAL). At 194–198 (MRHLG) the chain is on the cytoplasmic side. Residues 199 to 219 (YLGYTSGLSLTCMLFFLISVI) traverse the membrane as a helical segment. At 220 to 263 (YKKFQLGCTVGHNGTAVESKSSPSLPIHGLNTSCEAQMFTADSQ) the chain is on the extracellular side. An intrachain disulfide couples Cys227 to Cys253. An N-linked (GlcNAc...) asparagine glycan is attached at Asn232. The chain crosses the membrane as a helical span at residues 264-284 (MFYTVPIMAFAFVCHPEVLPI). Topologically, residues 285 to 301 (YTELCRPSKRRMQAVAN) are cytoplasmic. The helical transmembrane segment at 302–322 (VSIGAMFCMYGLTATFGYLTF) threads the bilayer. Topologically, residues 323 to 340 (YSSVEAEMLHMYSQHDLL) are extracellular. A helical membrane pass occupies residues 341–361 (ILCVRLAVLLAVTLTVPVVLF). Topologically, residues 362 to 382 (PIRRALQQLLFPSKAFSWPRH) are cytoplasmic. The helical transmembrane segment at 383–403 (VAIALILLVLVNVLVICVPTI) threads the bilayer. Residues 404–405 (RD) lie on the Extracellular side of the membrane. Residues 406–426 (IFGVIGSTSAPSLIFILPSIF) traverse the membrane as a helical segment. Topologically, residues 427-445 (YLRIVPSEVEPLYSWPKIQ) are cytoplasmic. Residues 446 to 466 (ALCFGVLGVLFMAISLGFMFA) form a helical membrane-spanning segment. The Extracellular portion of the chain corresponds to 467 to 478 (NWATGQSHVSGH).

The protein belongs to the amino acid/polyamine transporter 2 family.

It is found in the cell membrane. It catalyses the reaction L-serine(out) + Na(+)(out) + H(+)(in) = L-serine(in) + Na(+)(in) + H(+)(out). The catalysed reaction is L-alanine(out) + Na(+)(out) + H(+)(in) = L-alanine(in) + Na(+)(in) + H(+)(out). It carries out the reaction glycine(out) + Na(+)(out) + H(+)(in) = glycine(in) + Na(+)(in) + H(+)(out). The enzyme catalyses L-glutamine(out) + Na(+)(out) + H(+)(in) = L-glutamine(in) + Na(+)(in) + H(+)(out). It catalyses the reaction L-asparagine(out) + Na(+)(out) + H(+)(in) = L-asparagine(in) + Na(+)(in) + H(+)(out). The catalysed reaction is L-histidine(out) + Na(+)(out) + H(+)(in) = L-histidine(in) + Na(+)(in) + H(+)(out). It carries out the reaction L-cysteine(out) + Na(+)(out) + H(+)(in) = L-cysteine(in) + Na(+)(in) + H(+)(out). Not inhibited by lithium. Partial allosteric regulation on ions sodium binding. In terms of biological role, symporter that cotransports neutral amino acids and sodium ions, coupled to an H(+) antiporter activity. Releases L-glutamine and glycine from astroglial cells and may participate in the glutamate/GABA-glutamine cycle and the NMDA receptors activation. In addition contributes significantly to L-glutamine uptake in retina, namely in ganglion and Mueller cells and, therefore participates in the retinal glutamate-glutamine cycle. The transport activity is pH sensitive, Li(+) tolerant, bidirectional and associated with large uncoupled fluxes of protons. The transport is electroneutral coupled to the cotransport of 1 Na(+) and the antiport of 1 H(+). May have particular importance for modulation of net hepatic glutamine flux. The sequence is that of Sodium-coupled neutral amino acid transporter 5 from Bos taurus (Bovine).